The sequence spans 150 residues: Ribonuclease K6 (150 aa).

The first 23 residues, 1–23 (MVLCFPLLLLLLVLWGPVCLLHA), serve as a signal peptide directing secretion. The active-site Proton acceptor is histidine 38. Cystine bridges form between cysteine 46–cysteine 104, cysteine 60–cysteine 114, cysteine 78–cysteine 129, and cysteine 85–cysteine 92. Asparagine 55 is a glycosylation site (N-linked (GlcNAc...) asparagine). Residues 61–65 (KHQNT) and lysine 86 each bind substrate. Residue asparagine 100 is glycosylated (N-linked (GlcNAc...) asparagine). Arginine 105 lines the substrate pocket. Catalysis depends on histidine 145, which acts as the Proton donor.

Belongs to the pancreatic ribonuclease family. Interacts (via N-terminus) with bacterial lipopolysaccharide (LPS).

Its subcellular location is the secreted. The protein localises to the lysosome. It is found in the cytoplasmic granule. Ribonuclease which shows a preference for the pyrimidines uridine and cytosine. Has potent antibacterial activity against a range of Gram-positive and Gram-negative bacteria, including P.aeruginosa, A.baumanii, M.luteus, S.aureus, E.faecalis, E.faecium, S.saprophyticus and E.coli. Causes loss of bacterial membrane integrity, and also promotes agglutination of Gram-negative bacteria. Probably contributes to urinary tract sterility. Bactericidal activity is independent of RNase activity. The protein is Ribonuclease K6 (RNASE6) of Chlorocebus aethiops (Green monkey).